The chain runs to 148 residues: Hemoglobin subunit beta (148 aa).

A Globin domain is found at aspartate 3 to histidine 148. The heme b site is built by histidine 64 and histidine 93.

This sequence belongs to the globin family. As to quaternary structure, heterotetramer of two alpha chains and two beta chains. As to expression, red blood cells.

Involved in oxygen transport from gills to the various peripheral tissues. The polypeptide is Hemoglobin subunit beta (hbb) (Oncorhynchus nerka (Sockeye salmon)).